A 217-amino-acid polypeptide reads, in one-letter code: Probable GTP-binding protein EngB (217 aa).

In terms of domain architecture, EngB-type G spans 33–217; it reads GPAEIAFAGR…RITIEQAVAR (185 aa). Residues 41–48, 68–72, 95–98, 162–165, and 196–198 each bind GTP; these read GRSNVGKS, GRTQE, DMPG, TKTD, and TSS. Residues Ser-48 and Thr-70 each coordinate Mg(2+).

It belongs to the TRAFAC class TrmE-Era-EngA-EngB-Septin-like GTPase superfamily. EngB GTPase family. The cofactor is Mg(2+).

Necessary for normal cell division and for the maintenance of normal septation. This chain is Probable GTP-binding protein EngB, found in Sinorhizobium fredii (strain NBRC 101917 / NGR234).